We begin with the raw amino-acid sequence, 322 residues long: Delta-aminolevulinic acid dehydratase (322 aa).

Residues cysteine 120, cysteine 122, and cysteine 130 each coordinate Zn(2+). Lysine 195 acts as the Schiff-base intermediate with substrate in catalysis. Arginine 205 and arginine 217 together coordinate 5-aminolevulinate. Glutamate 233 contributes to the Mg(2+) binding site. The active-site Schiff-base intermediate with substrate is the lysine 248. 5-aminolevulinate is bound by residues serine 274 and tyrosine 312.

It belongs to the ALAD family. As to quaternary structure, homooctamer. Zn(2+) serves as cofactor.

The catalysed reaction is 2 5-aminolevulinate = porphobilinogen + 2 H2O + H(+). It participates in porphyrin-containing compound metabolism; protoporphyrin-IX biosynthesis; coproporphyrinogen-III from 5-aminolevulinate: step 1/4. Functionally, catalyzes an early step in the biosynthesis of tetrapyrroles. Binds two molecules of 5-aminolevulinate per subunit, each at a distinct site, and catalyzes their condensation to form porphobilinogen. The chain is Delta-aminolevulinic acid dehydratase (hemB) from Archaeoglobus fulgidus (strain ATCC 49558 / DSM 4304 / JCM 9628 / NBRC 100126 / VC-16).